A 329-amino-acid polypeptide reads, in one-letter code: DNA-directed RNA polymerase subunit alpha (329 aa).

The tract at residues 1-235 (MQGSVTEFLK…EQLDAFVDLR (235 aa)) is alpha N-terminal domain (alpha-NTD). The interval 249–329 (FDPILLRPVD…NWPPASIAED (81 aa)) is alpha C-terminal domain (alpha-CTD).

This sequence belongs to the RNA polymerase alpha chain family. Homodimer. The RNAP catalytic core consists of 2 alpha, 1 beta, 1 beta' and 1 omega subunit. When a sigma factor is associated with the core the holoenzyme is formed, which can initiate transcription.

The catalysed reaction is RNA(n) + a ribonucleoside 5'-triphosphate = RNA(n+1) + diphosphate. Functionally, DNA-dependent RNA polymerase catalyzes the transcription of DNA into RNA using the four ribonucleoside triphosphates as substrates. This chain is DNA-directed RNA polymerase subunit alpha, found in Photobacterium profundum (strain SS9).